The primary structure comprises 178 residues: Beta-lactoglobulin-1A/1C (178 aa).

The signal sequence occupies residues 1–18 (MRCLLLTLGLALLCGVQA). Disulfide bonds link Cys-84–Cys-176 and Cys-124–Cys-137.

It belongs to the calycin superfamily. Lipocalin family. In terms of assembly, under physiological conditions beta-lactoglobulin exists as an equilibrium mixture of monomeric and dimeric forms.

The protein resides in the secreted. In terms of biological role, lactoglobulin is the primary component of whey, it binds retinol and is probably involved in the transport of that molecule. The polypeptide is Beta-lactoglobulin-1A/1C (Sus scrofa (Pig)).